Reading from the N-terminus, the 713-residue chain is Segment polarity protein dishevelled homolog DVL-3 (713 aa).

Residues 1–82 (MGETKVIYHL…RVVCWLVSAD (82 aa)) enclose the DIX domain. Polar residues-rich tracts occupy residues 87–98 (DAGSVCADNQSD) and 118–127 (HPNTRGSQEN). Residues 87–235 (DAGSVCADNQ…PRIERSSSFS (149 aa)) are disordered. Positions 140 to 155 (AHRERPRRKETPEHAT) are enriched in basic and acidic residues. Residues 173 to 189 (ESSSTLMSSELDSTSFF) are compositionally biased toward low complexity. The segment covering 199 to 210 (RFSNSTEQSSAS) has biased composition (polar residues). Residues 212 to 225 (LMRRHKRRRRKPKA) show a composition bias toward basic residues. Residues 248–333 (TVTLNMEKYN…KPGPITLTVA (86 aa)) enclose the PDZ domain. The DEP domain maps to 421–495 (PESGLEVRDR…SEQCYYIFGD (75 aa)). Residues 508–518 (HDGSSGTSDQD) show a composition bias toward polar residues. Disordered regions lie at residues 508–527 (HDGS…PHPG) and 545–652 (YSPH…GPPG). A compositionally biased stretch (low complexity) spans 564–579 (GSQHSEGSRSSGSNRS). Composition is skewed to basic and acidic residues over residues 580-593 (STEK…KGGD) and 602-618 (ESDH…RAAS). Residues 629–646 (HRSHHSIAHSIRSHHTHH) are compositionally biased toward basic residues.

It belongs to the DSH family.

The protein resides in the cytoplasm. In terms of biological role, involved in the signal transduction pathway mediated by multiple Wnt genes. Required during ciliogenesis for the docking of basal bodies to the apical plasma membrane. The polypeptide is Segment polarity protein dishevelled homolog DVL-3 (Xenopus tropicalis (Western clawed frog)).